A 2963-amino-acid chain; its full sequence is tRNA nuclease CdiA (2963 aa).

The signal sequence occupies residues 1–29 (MIPIYLRQKLISYALIYLVAIQPIMPVMA). Residues 35 to 320 (AQGSTALDKA…AQGNITLNSH (286 aa)) form a two-partner system transport domain (TPS) region. The FHA-1 stretch occupies residues 573 to 1074 (GNVVAQEHAQ…MVLNTASLLN (502 aa)). A receptor binding domain (RBD) region spans residues 1075–1342 (RRDGFSVTEK…KPLTRAQLSD (268 aa)). The tract at residues 1343–1528 (YPLPDSNNGL…LAKAEQAHLQ (186 aa)) is YP domain. A periplasmic FHA-1 repeat (pFR) region spans residues 1529 to 1751 (GSVISGNKVE…ATLQAERDVN (223 aa)). Residues 1759–1770 (TRNQHIDSEDKT) are compositionally biased toward basic and acidic residues. Disordered stretches follow at residues 1759–1787 (TRNQ…LTAS) and 1992–2012 (SKSS…SASA). Residues 1762–2314 (QHIDSEDKTT…DSDNYNSIQK (553 aa)) form an FHA-2 region. A compositionally biased stretch (polar residues) spans 1771–1782 (TGYTRSTLSSGG). The VEDN CT cleavage motif motif lies at 2694 to 2697 (VEDN). Residues 2694-2963 (VEDNNLSFGK…TGRVRNFHPN (270 aa)) form a C-terminal effector domain (CT) region.

It in the N-terminal section; belongs to the CdiA toxin family. The protein in the C-terminal section; belongs to the bacterial EndoU family. Forms a 1:1 complex with cognate immunity protein CdiI.

The protein resides in the secreted. It is found in the target cell. The protein localises to the target cell cytoplasm. In terms of biological role, toxic component of a toxin-immunity protein module, which functions as a cellular contact-dependent growth inhibition (CDI) system. CDI modules allow bacteria to communicate with and inhibit the growth of closely related neighboring bacteria in a contact-dependent fashion. Targeting of the CT domain (residues 2824-2963) in the absence of immunity protein inhibits cell growth and causes tRNA(UUC-Glu) cleavage in the anticodon loop; expression of cognate immunity protein CdiI-43969 neutralizes growth inhibition and tRNA(UUC-Glu) remains intact, whereas non-cognate immunity proteins do not confer protection from the toxic effects. Functionally, the CdiA protein is thought to be exported from the cell through the central lumen of CdiB, the other half of its two-partner system (TPS). The TPS domain probably remains associated with CdiB while the FHA-1 domain forms an extended filament with the receptor-binding domain (RBD) at its extremity; in the secretion arrested state the C-terminus of the RBD and YP domains form a hairpin-like structure as the FHA-2, PT and CT domains are periplasmic. The YP domain is probably responsible for this arrest at the point where it re-enters the host cell periplasm. Upon binding to a target cell outer membrane receptor a signal is transmitted to activate secretion. The filament elongates slightly, the rest of CdiA is secreted and the FHA-2 domain becomes stably associated with the target cell's outer membrane where it facilitates entry of the toxic CT domain into the target cell periplasm. From there the toxic CT domain is cleaved and gains access to the target cell cytoplasm via an inner membrane protein. The chain is tRNA nuclease CdiA from Yersinia mollaretii (strain ATCC 43969 / DSM 18520 / CIP 103324 / CNY 7263 / WAIP 204).